A 310-amino-acid polypeptide reads, in one-letter code: Methionyl-tRNA formyltransferase (310 aa).

Residue 110 to 113 coordinates (6S)-5,6,7,8-tetrahydrofolate; it reads SLLP.

This sequence belongs to the Fmt family.

It catalyses the reaction L-methionyl-tRNA(fMet) + (6R)-10-formyltetrahydrofolate = N-formyl-L-methionyl-tRNA(fMet) + (6S)-5,6,7,8-tetrahydrofolate + H(+). In terms of biological role, attaches a formyl group to the free amino group of methionyl-tRNA(fMet). The formyl group appears to play a dual role in the initiator identity of N-formylmethionyl-tRNA by promoting its recognition by IF2 and preventing the misappropriation of this tRNA by the elongation apparatus. This Clostridium tetani (strain Massachusetts / E88) protein is Methionyl-tRNA formyltransferase.